Reading from the N-terminus, the 141-residue chain is Large ribosomal subunit protein uL11 (141 aa).

The protein belongs to the universal ribosomal protein uL11 family. Part of the ribosomal stalk of the 50S ribosomal subunit. Interacts with L10 and the large rRNA to form the base of the stalk. L10 forms an elongated spine to which L12 dimers bind in a sequential fashion forming a multimeric L10(L12)X complex. Post-translationally, one or more lysine residues are methylated.

Its function is as follows. Forms part of the ribosomal stalk which helps the ribosome interact with GTP-bound translation factors. This chain is Large ribosomal subunit protein uL11, found in Agathobacter rectalis (strain ATCC 33656 / DSM 3377 / JCM 17463 / KCTC 5835 / VPI 0990) (Eubacterium rectale).